The following is a 510-amino-acid chain: MYTSHEDIGYDFEDGPKDKKTLKPHPNIDGGWAWMMVLSSFFVHILIMGSQMALGVLNVEWLEEFHQSRGLTAWVSSLSMGITLIVGPFIGLFINTCGCRQTAIIGGLVNSLGWVLSAYAANVHYLFITFGVAAGLGSGMAYLPAVVMVGRYFQKRRALAQGLSTTGTGFGTFLMTVLLKYLCAEYGWRNAMLIQGAVSLNLCVCGALMRPLSPGKNPNDPGEKDVRGLPAHSTESVKSTGQQGRTEEKDGGLGNEETLCDLQAQECPDQAGHRKNMCALRILKTVSWLTMRVRKGFEDWYSGYFGTASLFTNRMFVAFIFWALFAYSSFVIPFIHLPEIVNLYNLSEQNDVFPLTSIIAIVHIFGKVILGVIADLPCISVWNVFLLANFTLVLSIFILPLMHTYAGLAVICALIGFSSGYFSLMPVVTEDLVGIEHLANAYGIIICANGISALLGPPFAGWIYDITQKYDFSFYICGLLYMIGILFLLIQPCIRIIEQSRRKYMDGAHV.

The Cytoplasmic portion of the chain corresponds to 1–27 (MYTSHEDIGYDFEDGPKDKKTLKPHPN). 6 helical membrane passes run 28-48 (IDGG…ILIM), 74-94 (WVSS…GLFI), 103-123 (AIIG…AANV), 127-147 (FITF…PAVV), 159-179 (LAQG…TVLL), and 191-209 (AMLI…GALM). Residues 214–255 (PGKNPNDPGEKDVRGLPAHSTESVKSTGQQGRTEEKDGGLGN) are disordered. Polar residues predominate over residues 233 to 244 (STESVKSTGQQG). Helical transmembrane passes span 315 to 335 (MFVA…IPFI), 353 to 373 (FPLT…LGVI), 379 to 399 (ISVW…IFIL), 408 to 428 (LAVI…MPVV), 443 to 463 (GIII…AGWI), and 474 to 494 (FYIC…QPCI). Topologically, residues 495 to 510 (RIIEQSRRKYMDGAHV) are cytoplasmic.

The protein belongs to the major facilitator superfamily. Monocarboxylate porter (TC 2.A.1.13) family.

Its subcellular location is the cell membrane. Functionally, proton-linked monocarboxylate transporter. May catalyze the transport of monocarboxylates across the plasma membrane. The polypeptide is Monocarboxylate transporter 14 (SLC16A14) (Homo sapiens (Human)).